Here is a 131-residue protein sequence, read N- to C-terminus: Holo-[acyl-carrier-protein] synthase (131 aa).

Mg(2+) is bound by residues Asp-8 and Glu-59.

It belongs to the P-Pant transferase superfamily. AcpS family. Mg(2+) serves as cofactor.

The protein resides in the cytoplasm. The catalysed reaction is apo-[ACP] + CoA = holo-[ACP] + adenosine 3',5'-bisphosphate + H(+). In terms of biological role, transfers the 4'-phosphopantetheine moiety from coenzyme A to a Ser of acyl-carrier-protein. This Rickettsia massiliae (strain Mtu5) protein is Holo-[acyl-carrier-protein] synthase.